A 70-amino-acid polypeptide reads, in one-letter code: Guanine nucleotide-binding protein subunit gamma-1 (70 aa).

Cys67 bears the Cysteine methyl ester mark. Residue Cys67 is the site of S-geranylgeranyl cysteine attachment. Positions 68-70 are cleaved as a propeptide — removed in mature form; that stretch reads TVL.

This sequence belongs to the G protein gamma family. As to quaternary structure, g proteins are composed of 3 units, alpha, beta and gamma. As to expression, predominantly expressed in the central nervous system.

Its subcellular location is the cell membrane. Its function is as follows. Guanine nucleotide-binding proteins (G proteins) are involved as a modulator or transducer in various transmembrane signaling systems. The beta and gamma chains are required for the GTPase activity, for replacement of GDP by GTP, and for G protein-effector interaction. The sequence is that of Guanine nucleotide-binding protein subunit gamma-1 (Ggamma1) from Drosophila melanogaster (Fruit fly).